Here is a 605-residue protein sequence, read N- to C-terminus: Glycerophosphodiester phosphodiesterase domain-containing protein 5 (605 aa).

Topologically, residues 1–42 are cytoplasmic; the sequence is MVRHQPLQYYEPQLCLSCLTGIYGCRWKRYQRSHDDTTPWER. Disulfide bonds link Cys15–Cys18 and Cys25–Cys571. A helical transmembrane segment spans residues 43–63; that stretch reads LWFLLLTFTFGLTLTWLYFWW. The Extracellular segment spans residues 64–89; sequence EVHNDYDEFNWYLYNRMGYWSDWPVP. The helical transmembrane segment at 90–110 threads the bilayer; sequence ILVTTAAAFAYIAGLLVLALC. The Cytoplasmic portion of the chain corresponds to 111-125; that stretch reads HIAVGQQMNLHWLHK. A helical transmembrane segment spans residues 126–146; it reads IGLVVILASTVVAMSAVAQLW. The Extracellular segment spans residues 147–160; the sequence is EDEWEVLLISLQGT. The helical transmembrane segment at 161–181 threads the bilayer; it reads APFLHVGAVAAVTMLSWIVAG. The Cytoplasmic segment spans residues 182 to 192; that stretch reads QFARAERTSSQ. A helical transmembrane segment spans residues 193–213; that stretch reads VTILCTFFTVVFALYLAPLTI. Over 214 to 496 the chain is Extracellular; sequence SSPCIMEKKD…PLWIMPPDEY (283 aa). The region spanning 228 to 485 is the GP-PDE domain; the sequence is PALIGHRGAP…DNSHALSQVP (258 aa). Residues Asn301, Asn336, Asn352, Asn374, and Asn448 are each glycosylated (N-linked (GlcNAc...) asparagine). Residues 497–517 form a helical membrane-spanning segment; sequence CLMWVTADLVSFTLIVGIFVL. The Cytoplasmic portion of the chain corresponds to 518–605; that stretch reads QKWRLGGIRS…TKTLIERSGR (88 aa). Residues 582-605 are disordered; sequence STATPVGPRGGGSHTKTLIERSGR.

It belongs to the glycerophosphoryl diester phosphodiesterase family. As to quaternary structure, interacts with PRDX1; forms a mixed-disulfide with PRDX1, leading to disrupt intramolecular disulfide bond between Cys-25 and Cys-571. Post-translationally, intramolecular disulfide bond between Cys-25 and Cys-571 is reduced by PRDX1.

Its subcellular location is the endomembrane system. It is found in the cytoplasm. It localises to the perinuclear region. The protein resides in the cell projection. The protein localises to the growth cone. It catalyses the reaction a 1,2-diacyl-sn-glycero-3-phospho-(1D-myo-inositol-4,5-bisphosphate) + H2O = 1D-myo-inositol 1,4,5-trisphosphate + a 1,2-diacyl-sn-glycerol + H(+). The catalysed reaction is sn-glycerol 3-phosphocholine + H2O = sn-glycerol 3-phosphate + choline + H(+). Its function is as follows. Glycerophosphodiester phosphodiesterase that promotes neurite formation and drives spinal motor neuron differentiation. Mediates the cleavage of glycosylphosphatidylinositol (GPI) anchor of target proteins: removes the GPI-anchor of RECK, leading to release RECK from the plasma membrane. May contribute to the osmotic regulation of cellular glycerophosphocholine. This is Glycerophosphodiester phosphodiesterase domain-containing protein 5 from Homo sapiens (Human).